The primary structure comprises 90 residues: uncharacterized protein (90 aa).

A signal peptide spans 1–20 (MEKLFVLVFALALLAFSSDA).

The protein resides in the secreted. This is an uncharacterized protein from Mus musculus (Mouse).